Reading from the N-terminus, the 378-residue chain is Homoserine O-acetyltransferase (378 aa).

Residues 54–355 form the AB hydrolase-1 domain; it reads NAILVCHALS…NNPAGHDSFL (302 aa). Catalysis depends on S159, which acts as the Nucleophile. Residue R228 participates in substrate binding. Catalysis depends on residues D318 and H351. D352 provides a ligand contact to substrate.

The protein belongs to the AB hydrolase superfamily. MetX family. As to quaternary structure, homodimer.

It is found in the cytoplasm. The enzyme catalyses L-homoserine + acetyl-CoA = O-acetyl-L-homoserine + CoA. It participates in amino-acid biosynthesis; L-methionine biosynthesis via de novo pathway; O-acetyl-L-homoserine from L-homoserine: step 1/1. Its function is as follows. Transfers an acetyl group from acetyl-CoA to L-homoserine, forming acetyl-L-homoserine. The sequence is that of Homoserine O-acetyltransferase from Leptospira biflexa serovar Patoc (strain Patoc 1 / Ames).